A 480-amino-acid polypeptide reads, in one-letter code: Argininosuccinate lyase (480 aa).

Belongs to the lyase 1 family. Argininosuccinate lyase subfamily.

The protein localises to the cytoplasm. The catalysed reaction is 2-(N(omega)-L-arginino)succinate = fumarate + L-arginine. It functions in the pathway amino-acid biosynthesis; L-arginine biosynthesis; L-arginine from L-ornithine and carbamoyl phosphate: step 3/3. The protein is Argininosuccinate lyase of Ruthia magnifica subsp. Calyptogena magnifica.